A 529-amino-acid polypeptide reads, in one-letter code: Ribonuclease Y (529 aa).

A helical transmembrane segment spans residues 4-24; sequence GLIYISLEVLVACLITALVMY. A KH domain is found at 216–297; the sequence is LTTRIALPCS…NRIEEVYHRV (82 aa). Residues 342 to 435 enclose the HD domain; that stretch reads ALQHSKEVAL…VCAADALSAG (94 aa).

Belongs to the RNase Y family.

The protein localises to the cell membrane. Endoribonuclease that initiates mRNA decay. The protein is Ribonuclease Y of Helicobacter pylori (strain ATCC 700392 / 26695) (Campylobacter pylori).